The following is a 120-amino-acid chain: Large ribosomal subunit protein bL19 (120 aa).

The protein belongs to the bacterial ribosomal protein bL19 family.

This protein is located at the 30S-50S ribosomal subunit interface and may play a role in the structure and function of the aminoacyl-tRNA binding site. The chain is Large ribosomal subunit protein bL19 from Marinomonas sp. (strain MWYL1).